Reading from the N-terminus, the 142-residue chain is Large ribosomal subunit protein uL13 (142 aa).

This sequence belongs to the universal ribosomal protein uL13 family. Part of the 50S ribosomal subunit.

In terms of biological role, this protein is one of the early assembly proteins of the 50S ribosomal subunit, although it is not seen to bind rRNA by itself. It is important during the early stages of 50S assembly. The chain is Large ribosomal subunit protein uL13 from Pyrococcus furiosus (strain ATCC 43587 / DSM 3638 / JCM 8422 / Vc1).